The chain runs to 879 residues: Valine--tRNA ligase (879 aa).

A 'HIGH' region motif is present at residues 45–55 (PNVTGKLHLGH). Positions 521–525 (KMSKS) match the 'KMSKS' region motif. Lys524 contributes to the ATP binding site. Residues 806 to 879 (LTELVNVDEE…ERIQDLKESK (74 aa)) adopt a coiled-coil conformation.

This sequence belongs to the class-I aminoacyl-tRNA synthetase family. ValS type 1 subfamily. In terms of assembly, monomer.

It is found in the cytoplasm. The catalysed reaction is tRNA(Val) + L-valine + ATP = L-valyl-tRNA(Val) + AMP + diphosphate. Catalyzes the attachment of valine to tRNA(Val). As ValRS can inadvertently accommodate and process structurally similar amino acids such as threonine, to avoid such errors, it has a 'posttransfer' editing activity that hydrolyzes mischarged Thr-tRNA(Val) in a tRNA-dependent manner. This is Valine--tRNA ligase from Lactobacillus acidophilus (strain ATCC 700396 / NCK56 / N2 / NCFM).